A 305-amino-acid chain; its full sequence is GMP synthase [glutamine-hydrolyzing] subunit B (305 aa).

Residues 2–184 (VDANAFIDEA…LPLPEEISER (183 aa)) enclose the GMPS ATP-PPase domain. An ATP-binding site is contributed by 29–35 (SGGVDSS).

In terms of assembly, heterodimer composed of a glutamine amidotransferase subunit (A) and a GMP-binding subunit (B).

It catalyses the reaction XMP + L-glutamine + ATP + H2O = GMP + L-glutamate + AMP + diphosphate + 2 H(+). Its pathway is purine metabolism; GMP biosynthesis; GMP from XMP (L-Gln route): step 1/1. Catalyzes the synthesis of GMP from XMP. The chain is GMP synthase [glutamine-hydrolyzing] subunit B from Methanocella arvoryzae (strain DSM 22066 / NBRC 105507 / MRE50).